We begin with the raw amino-acid sequence, 287 residues long: 4-diphosphocytidyl-2-C-methyl-D-erythritol kinase (287 aa).

Lys14 is a catalytic residue. 98–108 (PPGAGLGGGSS) provides a ligand contact to ATP. Residue Asp140 is part of the active site.

The protein belongs to the GHMP kinase family. IspE subfamily.

The catalysed reaction is 4-CDP-2-C-methyl-D-erythritol + ATP = 4-CDP-2-C-methyl-D-erythritol 2-phosphate + ADP + H(+). It functions in the pathway isoprenoid biosynthesis; isopentenyl diphosphate biosynthesis via DXP pathway; isopentenyl diphosphate from 1-deoxy-D-xylulose 5-phosphate: step 3/6. In terms of biological role, catalyzes the phosphorylation of the position 2 hydroxy group of 4-diphosphocytidyl-2C-methyl-D-erythritol. This Methylacidiphilum infernorum (isolate V4) (Methylokorus infernorum (strain V4)) protein is 4-diphosphocytidyl-2-C-methyl-D-erythritol kinase.